Consider the following 170-residue polypeptide: Probable phospholipid hydroperoxide glutathione peroxidase (170 aa).

Residue cysteine 44 is part of the active site.

It belongs to the glutathione peroxidase family.

It localises to the cytoplasm. The enzyme catalyses a hydroperoxy polyunsaturated fatty acid + 2 glutathione = a hydroxy polyunsaturated fatty acid + glutathione disulfide + H2O. Protects cells and enzymes from oxidative damage, by catalyzing the reduction of hydrogen peroxide, lipid peroxides and organic hydroperoxide, by glutathione. This chain is Probable phospholipid hydroperoxide glutathione peroxidase (GPXMC1), found in Mesembryanthemum crystallinum (Common ice plant).